The sequence spans 201 residues: MAPLVGVVALQGGFAEHIEVLESLGANTRRVRRSADLQGLDGIVLPGGESTVIDKLMRSFSLAEPLKDAVRRGLPVLATCAGLVVLATDLEDAAKGQHTLSLLDVTVRRNAFGSQLDSFEGTLDIDGVGDGVSATFIRAPVITRVGPGVEVIAQLPDEAGNVSGAIVGVRQRNVLALSFHPEETDDDRVHRTWLRQVSEEV.

48–50 (GES) is an L-glutamine binding site. C80 functions as the Nucleophile in the catalytic mechanism. L-glutamine contacts are provided by residues R109 and 137-138 (IR). Catalysis depends on charge relay system residues H180 and E182.

The protein belongs to the glutaminase PdxT/SNO family. In terms of assembly, in the presence of PdxS, forms a dodecamer of heterodimers. Only shows activity in the heterodimer.

It carries out the reaction aldehydo-D-ribose 5-phosphate + D-glyceraldehyde 3-phosphate + L-glutamine = pyridoxal 5'-phosphate + L-glutamate + phosphate + 3 H2O + H(+). The catalysed reaction is L-glutamine + H2O = L-glutamate + NH4(+). It participates in cofactor biosynthesis; pyridoxal 5'-phosphate biosynthesis. Catalyzes the hydrolysis of glutamine to glutamate and ammonia as part of the biosynthesis of pyridoxal 5'-phosphate. The resulting ammonia molecule is channeled to the active site of PdxS. The chain is Pyridoxal 5'-phosphate synthase subunit PdxT from Cutibacterium acnes (strain DSM 16379 / KPA171202) (Propionibacterium acnes).